The sequence spans 260 residues: UPF0246 protein BURPS668_1321 (260 aa).

This sequence belongs to the UPF0246 family.

The protein is UPF0246 protein BURPS668_1321 of Burkholderia pseudomallei (strain 668).